The following is a 261-amino-acid chain: Indole-3-glycerol phosphate synthase (261 aa).

It belongs to the TrpC family.

It catalyses the reaction 1-(2-carboxyphenylamino)-1-deoxy-D-ribulose 5-phosphate + H(+) = (1S,2R)-1-C-(indol-3-yl)glycerol 3-phosphate + CO2 + H2O. It participates in amino-acid biosynthesis; L-tryptophan biosynthesis; L-tryptophan from chorismate: step 4/5. This Burkholderia cenocepacia (strain HI2424) protein is Indole-3-glycerol phosphate synthase.